We begin with the raw amino-acid sequence, 417 residues long: Synaptic vesicle membrane protein VAT-1 homolog-like (417 aa).

2 disordered regions span residues 1-33 (MAKEGVEKAEETEQMIEKETSKEPAEGGDGSHR) and 382-417 (PTPLMANDSTETSEAGEEEEDHEGDSENKERMPFIQ). S390 is subject to Phosphoserine. Phosphothreonine occurs at positions 391 and 393. Position 394 is a phosphoserine (S394). Residues 395–405 (EAGEEEEDHEG) show a composition bias toward acidic residues. The span at 406-417 (DSENKERMPFIQ) shows a compositional bias: basic and acidic residues.

The protein belongs to the zinc-containing alcohol dehydrogenase family. Quinone oxidoreductase subfamily.

The chain is Synaptic vesicle membrane protein VAT-1 homolog-like (Vat1l) from Mus musculus (Mouse).